A 371-amino-acid polypeptide reads, in one-letter code: DNA primase DnaG (371 aa).

In terms of domain architecture, Toprim spans 173 to 248; it reads DEIILVEGRA…DIDYVAVAPP (76 aa). Mg(2+) contacts are provided by Glu179, Asp221, and Asp223.

This sequence belongs to the archaeal DnaG primase family. In terms of assembly, forms a ternary complex with MCM helicase and DNA. Component of the archaeal exosome complex. It depends on Mg(2+) as a cofactor.

The catalysed reaction is ssDNA + n NTP = ssDNA/pppN(pN)n-1 hybrid + (n-1) diphosphate.. Its function is as follows. RNA polymerase that catalyzes the synthesis of short RNA molecules used as primers for DNA polymerase during DNA replication. Also part of the exosome, which is a complex involved in RNA degradation. Acts as a poly(A)-binding protein that enhances the interaction between heteromeric, adenine-rich transcripts and the exosome. The chain is DNA primase DnaG from Nanoarchaeum equitans (strain Kin4-M).